The primary structure comprises 147 residues: MADITLISGSTLGGAEYVAEHLAEKLEEAGFTTETLHGPLLEDLSASGIWLVISSTHGAGDIPDNLSPFYEALQEQKPDLSAVRFGAIGIGSREYDTFCGAIDKLEAELKNSGAKQTGETLKINILDHDIPEDPAEEWLGSWINLLK.

In terms of domain architecture, Flavodoxin-like spans 4 to 143 (ITLISGSTLG…PAEEWLGSWI (140 aa)).

The protein belongs to the flavodoxin family. MioC subfamily. Homodimer. FMN serves as cofactor.

Its function is as follows. Probable electron transporter required for biotin synthase activity. This Escherichia coli O157:H7 protein is Protein MioC (mioC).